The primary structure comprises 472 residues: MIQRRRPVPFELGPVHFIGIGGIGMSGIAEIMLRIGYTVQGSDAKASANTERLEKLGARIFIGHDAAHVEGASAIVYSTAVKADNPEMVAGRDKRLPLVRRAEMLAELMRLQFSVAVGGTHGKTTTTSMVAALLDAGALDPTVVNGGIINAYGTNAKVGEGDWIVVEADESDGSFLKLKSTVAIVTNIDAEHLDHWGTFDAVKKGFQDFIENIPFYGFAAVCTDHPEVQALTARIENRRLVTYGTNPQAEVRVSNIQMGPEGAQFDILVSPLSGDLVLYEGLKMPMAGHHNVLNATAAVAVARELGVDADAIRAGLAGFGGVKRRFTTTGVANGVRIVDDYGHHPVEIAAVLKAARAVSTGKVIAVVQPHRFTRLRDLMTEFSSCFNDADTVIVADVYTAGEAPIEGVDRDHLVEGLKKFGHRRALALESPAALPALIAAEAQSGDLVVLLGAGDITNWSYALPGQLEALAK.

Gly-119 to Thr-125 serves as a coordination point for ATP.

Belongs to the MurCDEF family.

The protein resides in the cytoplasm. It carries out the reaction UDP-N-acetyl-alpha-D-muramate + L-alanine + ATP = UDP-N-acetyl-alpha-D-muramoyl-L-alanine + ADP + phosphate + H(+). It participates in cell wall biogenesis; peptidoglycan biosynthesis. In terms of biological role, cell wall formation. The polypeptide is UDP-N-acetylmuramate--L-alanine ligase (Caulobacter sp. (strain K31)).